We begin with the raw amino-acid sequence, 349 residues long: Probable myosin light chain kinase DDB_G0275057 (349 aa).

Residues 1–33 (MGCFNSKEAGAGRPKTTTQQQQQATPEPTVTTA) are disordered. Positions 16 to 33 (TTTQQQQQATPEPTVTTA) are enriched in low complexity. A Protein kinase domain is found at 56–313 (YVVGKELGRG…AKQCLDDLWL (258 aa)). ATP is bound by residues 62–70 (LGRGAFSVV) and Lys85. The Proton acceptor role is filled by Asp178.

The protein belongs to the protein kinase superfamily. CAMK Ser/Thr protein kinase family. CaMK subfamily.

The enzyme catalyses L-seryl-[myosin light chain] + ATP = O-phospho-L-seryl-[myosin light chain] + ADP + H(+). It carries out the reaction L-threonyl-[myosin light chain] + ATP = O-phospho-L-threonyl-[myosin light chain] + ADP + H(+). Does not have a calmodulin-binding domain. In terms of biological role, may phosphorylate a specific serine in the N-terminus of a myosin light chain. The protein is Probable myosin light chain kinase DDB_G0275057 of Dictyostelium discoideum (Social amoeba).